Here is a 121-residue protein sequence, read N- to C-terminus: Protein GAT4 (121 aa).

The segment at 29–48 (EAQHGLPRNADSQPARPRTG) is disordered. The segment at 53–79 (CGQCGEIKTSLQWREGPNGAACLCNAC) adopts a GATA-type zinc-finger fold.

This is Protein GAT4 (GAT4) from Saccharomyces cerevisiae (strain ATCC 204508 / S288c) (Baker's yeast).